The primary structure comprises 383 residues: 8-amino-7-oxononanoate synthase (383 aa).

Substrate is bound at residue arginine 20. Residue 107–108 participates in pyridoxal 5'-phosphate binding; sequence GY. Histidine 132 contributes to the substrate binding site. Pyridoxal 5'-phosphate-binding residues include serine 178, histidine 206, and threonine 233. Position 236 is an N6-(pyridoxal phosphate)lysine (lysine 236). Threonine 349 provides a ligand contact to substrate.

Belongs to the class-II pyridoxal-phosphate-dependent aminotransferase family. BioF subfamily. As to quaternary structure, homodimer. It depends on pyridoxal 5'-phosphate as a cofactor.

The catalysed reaction is 6-carboxyhexanoyl-[ACP] + L-alanine + H(+) = (8S)-8-amino-7-oxononanoate + holo-[ACP] + CO2. The protein operates within cofactor biosynthesis; biotin biosynthesis. Its function is as follows. Catalyzes the decarboxylative condensation of pimeloyl-[acyl-carrier protein] and L-alanine to produce 8-amino-7-oxononanoate (AON), [acyl-carrier protein], and carbon dioxide. This is 8-amino-7-oxononanoate synthase from Chromobacterium violaceum (strain ATCC 12472 / DSM 30191 / JCM 1249 / CCUG 213 / NBRC 12614 / NCIMB 9131 / NCTC 9757 / MK).